Consider the following 845-residue polypeptide: ATP-binding cassette sub-family F member 1 (845 aa).

Residues Met1–Leu261 form a disordered region. 2 positions are modified to phosphoserine: Ser22 and Ser24. The segment covering Lys29–Lys39 has biased composition (basic residues). A compositionally biased stretch (basic and acidic residues) spans Val47–Gln64. Over residues Gln73–Lys85 the composition is skewed to basic residues. Ser105 carries the phosphoserine modification. Thr108 carries the phosphothreonine modification. Phosphoserine; by CK2 is present on residues Ser109 and Ser140. Basic and acidic residues predominate over residues Glu147 to Arg160. Phosphoserine is present on Ser166. Residues Glu206 to Gln226 are compositionally biased toward basic and acidic residues. A compositionally biased stretch (acidic residues) spans Gly227–Gly241. Position 228 is a phosphoserine (Ser228). The 245-residue stretch at Ile304 to Leu548 folds into the ABC transporter 1 domain. Residue Gly336–Thr343 coordinates ATP. Residues Lys559 to Thr580 are compositionally biased toward basic and acidic residues. The interval Lys559 to Leu602 is disordered. Ser595 carries the phosphoserine modification. In terms of domain architecture, ABC transporter 2 spans Leu625–Val840. An ATP-binding site is contributed by Gly658–Ser665.

It belongs to the ABC transporter superfamily. ABCF family. EF3 subfamily. Isoform 2 interacts (via N-terminus) with EIF2S1; the interaction is independent of its phosphorylated status. Isoform 2 associates (via both ABC transporter domains) with the ribosomes. In terms of processing, isoform 2 is phosphorylated at phosphoserine and phosphothreonine. Isoform 2 phosphorylation on Ser-109 and Ser-140 by CK2 inhibits association of EIF2 with ribosomes. In terms of tissue distribution, ubiquitous.

The protein localises to the cytoplasm. The protein resides in the nucleus. It is found in the nucleoplasm. It localises to the nucleus envelope. In terms of biological role, isoform 2 is required for efficient Cap- and IRES-mediated mRNA translation initiation. Isoform 2 is not involved in the ribosome biogenesis. This is ATP-binding cassette sub-family F member 1 (ABCF1) from Homo sapiens (Human).